The chain runs to 485 residues: Podocalyxin (485 aa).

The first 24 residues, 1-24 (MRPTLALSALLLLQLLLLSTPSLS), serve as a signal peptide directing secretion. The tract at residues 22–267 (SLSQDNGNKT…STPSSTWTSG (246 aa)) is disordered. Residues 25 to 386 (QDNGNKTDTS…PPEVNEDRFS (362 aa)) are Extracellular-facing. The segment covering 26–57 (DNGNKTDTSDITSIDQNQDKPATNQPSNATPK) has biased composition (polar residues). N-linked (GlcNAc...) asparagine glycans are attached at residues Asn-29 and Asn-82. Low complexity predominate over residues 58–109 (SSVQPPTPTSISTSSPDPKATQSSNSSVTTTSDSTTDRTSSSTSTVPTTSNS). Polar residues-rich tracts occupy residues 110 to 128 (GQTV…TALP) and 135 to 149 (NASS…STKL). 3 N-linked (GlcNAc...) asparagine glycosylation sites follow: Asn-135, Asn-144, and Asn-156. A compositionally biased stretch (low complexity) spans 150-161 (PSTPTTNSTASP). Polar residues-rich tracts occupy residues 163 to 176 (QPVS…TTVQ), 186 to 228 (DNTT…QPTG), and 235 to 253 (SVPT…TPVV). Residue Asn-187 is glycosylated (N-linked (GlcNAc...) asparagine). A compositionally biased stretch (low complexity) spans 254-267 (SQGPSTPSSTWTSG). N-linked (GlcNAc...) asparagine glycosylation occurs at Asn-287. The helical transmembrane segment at 387-407 (LPLIITIVCMASFLLLVAALY) threads the bilayer. The Cytoplasmic segment spans residues 408-485 (GCCHQRISQR…DLDEEEDTHL (78 aa)). A Phosphothreonine modification is found at Thr-445. A Phosphoserine modification is found at Ser-464. Thr-483 carries the post-translational modification Phosphothreonine.

It belongs to the podocalyxin family. In terms of assembly, monomer; when associated with the membrane raft. Oligomer; when integrated in the apical membrane. Interacts with NHERF2. Interacts (via the C-terminal PDZ-binding motif DTHL) with NHERF1 (via the PDZ domains); the interaction take place early in the secretory pathway and is necessary for its apical membrane sorting. Found in a complex with EZR, PODXL and NHERF2. Associates with the actin cytoskeleton through complex formation with EZR and NHERF2. Interacts (via the C-terminal PDZ-binding motif DTHL) with NHERF1 (via the PDZ domains); interaction is not detected in glomerular epithelium cells. Interacts (via the C-terminal PDZ-binding motif DTHL) with NHERF2 (via the PDZ 1 domain); interaction is detected in glomerular epithelium cells. Interacts with EZR. N- and O-linked glycosylated. Sialoglycoprotein. In terms of tissue distribution, glomerular epithelium cell (podocyte) (at protein level).

The protein resides in the apical cell membrane. Its subcellular location is the cell projection. It is found in the microvillus. It localises to the membrane raft. The protein localises to the lamellipodium. The protein resides in the filopodium. Its subcellular location is the ruffle. It is found in the membrane. In terms of biological role, involved in the regulation of both adhesion and cell morphology and cancer progression. Functions as an anti-adhesive molecule that maintains an open filtration pathway between neighboring foot processes in the podocyte by charge repulsion. Acts as a pro-adhesive molecule, enhancing the adherence of cells to immobilized ligands, increasing the rate of migration and cell-cell contacts in an integrin-dependent manner. Induces the formation of apical actin-dependent microvilli. Involved in the formation of a preapical plasma membrane subdomain to set up initial epithelial polarization and the apical lumen formation during renal tubulogenesis. Plays a role in cancer development and aggressiveness by inducing cell migration and invasion through its interaction with the actin-binding protein EZR. Affects EZR-dependent signaling events, leading to increased activities of the MAPK and PI3K pathways in cancer cells. This chain is Podocalyxin (Podxl), found in Rattus norvegicus (Rat).